The chain runs to 185 residues: Threonylcarbamoyl-AMP synthase (185 aa).

Residues 4–185 (SWRVQQAAQD…IATAQIVRAG (182 aa)) enclose the YrdC-like domain.

Belongs to the SUA5 family. TsaC subfamily.

The protein localises to the cytoplasm. It carries out the reaction L-threonine + hydrogencarbonate + ATP = L-threonylcarbamoyladenylate + diphosphate + H2O. Functionally, required for the formation of a threonylcarbamoyl group on adenosine at position 37 (t(6)A37) in tRNAs that read codons beginning with adenine. Catalyzes the conversion of L-threonine, HCO(3)(-)/CO(2) and ATP to give threonylcarbamoyl-AMP (TC-AMP) as the acyladenylate intermediate, with the release of diphosphate. This chain is Threonylcarbamoyl-AMP synthase, found in Pseudomonas syringae pv. syringae (strain B728a).